The chain runs to 197 residues: Prefoldin subunit 3 (197 aa).

Ala-2 bears the N-acetylalanine mark. Lys-59 is modified (N6-acetyllysine).

It belongs to the prefoldin subunit alpha family. Heterohexamer of two PFD-alpha type and four PFD-beta type subunits. Binds to the C-terminal part of VHL. As to expression, ubiquitous.

The protein resides in the cytoplasm. It localises to the nucleus. Binds specifically to cytosolic chaperonin (c-CPN) and transfers target proteins to it. Binds to nascent polypeptide chain and promotes folding in an environment in which there are many competing pathways for nonnative proteins. The sequence is that of Prefoldin subunit 3 (VBP1) from Homo sapiens (Human).